We begin with the raw amino-acid sequence, 227 residues long: Cytochrome c oxidase subunit 2 (227 aa).

The Mitochondrial intermembrane segment spans residues 1-14 (MAYPFQLGFQDATS). Residues 15 to 45 (PIMEELLHFHDHTLMIVFLISSLVLYIITLM) traverse the membrane as a helical segment. The Mitochondrial matrix segment spans residues 46–59 (LTTKLTHTSTMDAQ). Residues 60 to 87 (EVETVWTILPAIILILIALPSLRILYMM) traverse the membrane as a helical segment. Residues 88–227 (DEVNNPSLTV…FFEKWSASML (140 aa)) lie on the Mitochondrial intermembrane side of the membrane. Positions 161, 196, 198, 200, 204, and 207 each coordinate Cu cation. Glu-198 is a binding site for Mg(2+).

Belongs to the cytochrome c oxidase subunit 2 family. In terms of assembly, component of the cytochrome c oxidase (complex IV, CIV), a multisubunit enzyme composed of 14 subunits. The complex is composed of a catalytic core of 3 subunits MT-CO1, MT-CO2 and MT-CO3, encoded in the mitochondrial DNA, and 11 supernumerary subunits COX4I, COX5A, COX5B, COX6A, COX6B, COX6C, COX7A, COX7B, COX7C, COX8 and NDUFA4, which are encoded in the nuclear genome. The complex exists as a monomer or a dimer and forms supercomplexes (SCs) in the inner mitochondrial membrane with NADH-ubiquinone oxidoreductase (complex I, CI) and ubiquinol-cytochrome c oxidoreductase (cytochrome b-c1 complex, complex III, CIII), resulting in different assemblies (supercomplex SCI(1)III(2)IV(1) and megacomplex MCI(2)III(2)IV(2)). Found in a complex with TMEM177, COA6, COX18, COX20, SCO1 and SCO2. Interacts with TMEM177 in a COX20-dependent manner. Interacts with COX20. Interacts with COX16. The cofactor is Cu cation.

The protein localises to the mitochondrion inner membrane. The enzyme catalyses 4 Fe(II)-[cytochrome c] + O2 + 8 H(+)(in) = 4 Fe(III)-[cytochrome c] + 2 H2O + 4 H(+)(out). Component of the cytochrome c oxidase, the last enzyme in the mitochondrial electron transport chain which drives oxidative phosphorylation. The respiratory chain contains 3 multisubunit complexes succinate dehydrogenase (complex II, CII), ubiquinol-cytochrome c oxidoreductase (cytochrome b-c1 complex, complex III, CIII) and cytochrome c oxidase (complex IV, CIV), that cooperate to transfer electrons derived from NADH and succinate to molecular oxygen, creating an electrochemical gradient over the inner membrane that drives transmembrane transport and the ATP synthase. Cytochrome c oxidase is the component of the respiratory chain that catalyzes the reduction of oxygen to water. Electrons originating from reduced cytochrome c in the intermembrane space (IMS) are transferred via the dinuclear copper A center (CU(A)) of subunit 2 and heme A of subunit 1 to the active site in subunit 1, a binuclear center (BNC) formed by heme A3 and copper B (CU(B)). The BNC reduces molecular oxygen to 2 water molecules using 4 electrons from cytochrome c in the IMS and 4 protons from the mitochondrial matrix. The polypeptide is Cytochrome c oxidase subunit 2 (MT-CO2) (Balaenoptera musculus (Blue whale)).